We begin with the raw amino-acid sequence, 218 residues long: ATP synthase subunit a (218 aa).

The next 5 membrane-spanning stretches (helical) occupy residues 17–37, 75–95, 104–124, 162–184, and 196–216; these read IYST…GIFL, YLPL…SWFI, DLST…IFGI, LFGN…PFLL, and GTIQ…NFVH.

It belongs to the ATPase A chain family. As to quaternary structure, F-type ATPases have 2 components, CF(1) - the catalytic core - and CF(0) - the membrane proton channel. CF(1) has five subunits: alpha(3), beta(3), gamma(1), delta(1), epsilon(1). CF(0) has three main subunits: a(1), b(2) and c(9-12). The alpha and beta chains form an alternating ring which encloses part of the gamma chain. CF(1) is attached to CF(0) by a central stalk formed by the gamma and epsilon chains, while a peripheral stalk is formed by the delta and b chains. In this bacterium the a and b subunits are transcribed but do not seem to be translated, thus the ATP synthase consists of the alpha, beta, gamma, delta, epsilon and c subunits.

The protein localises to the cell membrane. In terms of biological role, key component of the proton channel; it plays a direct role in the translocation of protons across the membrane. This Moorella thermoacetica (strain ATCC 39073 / JCM 9320) protein is ATP synthase subunit a.